The sequence spans 411 residues: Imidazolonepropionase (411 aa).

Fe(3+) is bound by residues His75 and His77. Zn(2+) contacts are provided by His75 and His77. Residues Arg84, Tyr147, and His180 each coordinate 4-imidazolone-5-propanoate. Residue Tyr147 participates in N-formimidoyl-L-glutamate binding. A Fe(3+)-binding site is contributed by His245. His245 serves as a coordination point for Zn(2+). Gln248 lines the 4-imidazolone-5-propanoate pocket. Asp320 contributes to the Fe(3+) binding site. Residue Asp320 participates in Zn(2+) binding. Asn322 and Gly324 together coordinate N-formimidoyl-L-glutamate. Thr325 serves as a coordination point for 4-imidazolone-5-propanoate.

This sequence belongs to the metallo-dependent hydrolases superfamily. HutI family. Zn(2+) serves as cofactor. It depends on Fe(3+) as a cofactor.

It localises to the cytoplasm. It carries out the reaction 4-imidazolone-5-propanoate + H2O = N-formimidoyl-L-glutamate. It functions in the pathway amino-acid degradation; L-histidine degradation into L-glutamate; N-formimidoyl-L-glutamate from L-histidine: step 3/3. Functionally, catalyzes the hydrolytic cleavage of the carbon-nitrogen bond in imidazolone-5-propanoate to yield N-formimidoyl-L-glutamate. It is the third step in the universal histidine degradation pathway. In Aeromonas salmonicida (strain A449), this protein is Imidazolonepropionase.